A 197-amino-acid chain; its full sequence is Adenylylsulfatase HINT3 (197 aa).

Residues 14–43 (NPPGPNPTRDPTLRVSDCSSGSSGDGKVES) form a disordered region. One can recognise an HIT domain in the interval 51–158 (VFCKIIRGES…IPRKERDCLW (108 aa)). Positions 143–147 (HTHIH) match the Histidine triad motif motif. H145 (tele-AMP-histidine intermediate) is an active-site residue. H147 is a substrate binding site.

It is found in the peroxisome. The catalysed reaction is adenosine 5'-phosphosulfate + H2O = sulfate + AMP + 2 H(+). In terms of biological role, possesses adenylylsulfatase activity in vitro. The polypeptide is Adenylylsulfatase HINT3 (Arabidopsis thaliana (Mouse-ear cress)).